Here is a 351-residue protein sequence, read N- to C-terminus: Cobalt-precorrin-5B C(1)-methyltransferase (351 aa).

This sequence belongs to the CbiD family.

The catalysed reaction is Co-precorrin-5B + S-adenosyl-L-methionine = Co-precorrin-6A + S-adenosyl-L-homocysteine. The protein operates within cofactor biosynthesis; adenosylcobalamin biosynthesis; cob(II)yrinate a,c-diamide from sirohydrochlorin (anaerobic route): step 6/10. Catalyzes the methylation of C-1 in cobalt-precorrin-5B to form cobalt-precorrin-6A. This Thermosipho africanus (strain TCF52B) protein is Cobalt-precorrin-5B C(1)-methyltransferase.